We begin with the raw amino-acid sequence, 302 residues long: Negative regulator of the PHO system (302 aa).

A Protein kinase domain is found at 6 to 296 (FKQLEKLGNG…AKQALLHPWF (291 aa)). ATP contacts are provided by residues 12-20 (LGNGTYATV) and Lys35. The active-site Proton acceptor is the Asp132.

It belongs to the protein kinase superfamily. CMGC Ser/Thr protein kinase family. CDC2/CDKX subfamily. In terms of assembly, interacts with a number of cyclins.

It catalyses the reaction L-seryl-[protein] + ATP = O-phospho-L-seryl-[protein] + ADP + H(+). The enzyme catalyses L-threonyl-[protein] + ATP = O-phospho-L-threonyl-[protein] + ADP + H(+). In terms of biological role, when phosphate concentrations are high it phosphorylates the PHO4 transcription factor thus establishing repression. The chain is Negative regulator of the PHO system (PHO85) from Candida glabrata (strain ATCC 2001 / BCRC 20586 / JCM 3761 / NBRC 0622 / NRRL Y-65 / CBS 138) (Yeast).